We begin with the raw amino-acid sequence, 395 residues long: GPI-anchor transamidase (395 aa).

The first 27 residues, Met-1–Ala-27, serve as a signal peptide directing secretion. The Lumenal portion of the chain corresponds to Ser-28–Gly-368. Residues Asp-79, Ile-82, Glu-118, and Asp-120 each coordinate Ca(2+). The Proton donor role is filled by His-164. Cys-206 acts as the Nucleophile; acyl-thioester intermediate in catalysis. The a protein site is built by Cys-206, Ser-232, and Ser-234. The autoinhibitory loop stretch occupies residues Asp-231–Gln-236. Residues Cys-275 and Cys-280 are joined by a disulfide bond. A helical transmembrane segment spans residues Gly-369–Thr-385. Topologically, residues Tyr-386 to Phe-395 are cytoplasmic.

This sequence belongs to the peptidase C13 family. As to quaternary structure, heteropentamer. Part of the GPI-anchor transamidase complex, consisting of PIGK, PIGT, PIGS, PIGU and GAA1. Interacts with GPAA1. Interacts with PIGT; this interaction, via a disulfide link, stabilizes the expression of GAA1 and PIGK and links them to PIGS. In terms of processing, the disulfide bond between PIGK/GPI8 and PIGT is important for normal enzyme activity.

Its subcellular location is the endoplasmic reticulum membrane. It functions in the pathway glycolipid biosynthesis; glycosylphosphatidylinositol-anchor biosynthesis. Its activity is regulated as follows. In the absence of proproteins substrates, exists in an inactive state with a disrupted catalytic site by an autoinhibitory loop. The binding of proprotein substrates, particularly the CSP region, to GPI-T triggers concerted conformational changes that alleviate the inhibition by the autoinhibitory loop. Meanwhile, proprotein residues near the omega- site induce the formation of a catalytic cleft for catalysis, following which the products are released and GPI-T reverts to the inactive state. Catalytic subunit of the glycosylphosphatidylinositol-anchor (GPI-anchor) transamidase (GPI-T) complex that catalyzes the formation of the linkage between a proprotein and a GPI-anchor and participates in GPI anchored protein biosynthesis. Recognizes diverse proproteins at a C-terminal signal peptide (CSP) region that lacks consensus sequence and replaces it with a GPI-anchor via a transamidation reaction. Transamidation catalysis reaction follows a two-phase mechanism. In the acyl-enzyme phase, the carbonyl group of the proproteins's omega-site undergoes a nucleophilic attack forming an enzyme-substrate thioester bond. Followed by a general acid catalysis that allows CSP releasing, regenerating the carbonyl, and forming the acyl-enzyme intermediate. In the GPI-anchor attachment phase, the amino group of the GPI-anchor's ethanolamine phosphate, the one on third mannose (EtNP3), mediates a nucleophilic attack on the carbonyl of the acyl-enzyme intermediate, replacing the CSP, allowing GPI-anchor attachment to the omega-residue, therefore forming the product and freeing the enzyme. The sequence is that of GPI-anchor transamidase from Sus scrofa (Pig).